The chain runs to 251 residues: Ubiquinone/menaquinone biosynthesis C-methyltransferase UbiE (251 aa).

S-adenosyl-L-methionine-binding positions include Thr74, Asp95, and 123–124 (NA).

It belongs to the class I-like SAM-binding methyltransferase superfamily. MenG/UbiE family.

The enzyme catalyses a 2-demethylmenaquinol + S-adenosyl-L-methionine = a menaquinol + S-adenosyl-L-homocysteine + H(+). It catalyses the reaction a 2-methoxy-6-(all-trans-polyprenyl)benzene-1,4-diol + S-adenosyl-L-methionine = a 5-methoxy-2-methyl-3-(all-trans-polyprenyl)benzene-1,4-diol + S-adenosyl-L-homocysteine + H(+). It functions in the pathway quinol/quinone metabolism; menaquinone biosynthesis; menaquinol from 1,4-dihydroxy-2-naphthoate: step 2/2. The protein operates within cofactor biosynthesis; ubiquinone biosynthesis. Functionally, methyltransferase required for the conversion of demethylmenaquinol (DMKH2) to menaquinol (MKH2) and the conversion of 2-polyprenyl-6-methoxy-1,4-benzoquinol (DDMQH2) to 2-polyprenyl-3-methyl-6-methoxy-1,4-benzoquinol (DMQH2). In Shewanella halifaxensis (strain HAW-EB4), this protein is Ubiquinone/menaquinone biosynthesis C-methyltransferase UbiE.